We begin with the raw amino-acid sequence, 262 residues long: Zinc finger protein 138 (262 aa).

A C2H2-type 1 zinc finger spans residues 110–132 (FRCKECDKSLCMLSRLTQHKKIH). The C2H2-type 2; degenerate zinc-finger motif lies at 138–160 (YKCEECGKTFNWSTNLSKPKKIH). The segment at 166 to 188 (YKCEVCGKAFHQSSILTKHKIIR) adopts a C2H2-type 3; degenerate zinc-finger fold. The C2H2-type 4 zinc-finger motif lies at 194–216 (YKCAHCGKAFKQSSHLTRHKIIH). The segment at 222-244 (YKCEQCGKVFKQSPTLTKHQIIY) adopts a C2H2-type 5; degenerate zinc-finger fold. Residues 250 to 262 (YKCEECGKAFNLS) form a C2H2-type 6; degenerate zinc finger.

It belongs to the krueppel C2H2-type zinc-finger protein family.

The protein localises to the nucleus. Its function is as follows. May be involved in transcriptional regulation as a repressor. The sequence is that of Zinc finger protein 138 (ZNF138) from Homo sapiens (Human).